A 1058-amino-acid chain; its full sequence is MPKRTDIQKIMVIGSGPIIIGQAAEFDYAGTQACLSLKEEGYEVVLVNSNPATIMTDKEIADKVYIEPITLEFVTRILRKEGPDALLPTLGGQTGLNMAMELSKNGILDELGVELLGTKLSAIDQAEDRDLFKQLMEELEQPIPESEIVNTVEEAVAFAATIGYPVIVRPAFTLGGTGGGMCANEKELREITENGLKLSPVTQCLIERSIAGFKEIEYEVMRDSADNALVVCNMENFDPVGIHTGDSIVFAPAQTMSDYENQMLRDASLSIIRALKIEGGCNVQLALDPNSFKYYVIEVNPRVSRSSALASKATGYPIAKLAAKIAVGLTLDEVINPVTGSTYAMFEPALDYVVAKIPRFPFDKFEKGERRLGTQMKATGEVMAIGRNIEESLLKACRSLEIGVHHNEIPELAAVSDDALIEKVVKAQDDRLFYVSEAIRRGYTPEEIAELTKIDIFYLDKLLHIFEIEQELGAHPQDLEVLKTAKLNGFSDRKIAELWGTTDDQVRQLRLENKIVPVYKMVDTCAAEFDSETPYFYSTYGWENESIRSDKESVLVLGSGPIRIGQGVEFDYATVHSVKAIQAAGYEAIIMNSNPETVSTDFSVSDKLYFEPLTFEDVMNVIDLEQPKGVIVQFGGQTAINLAEPLAKAGVTILGTQVADLDRAEDRDLFEQALKELDIPQPPGQTATNEEEAALAARKIGFPVLVRPSYVLGGRAMEIVENEEDLRSYMRTAVKASPDHPVLVDSYIVGQECEVDAISDGKDVLIPGIMEHIERAGVHSGDSMAVYPPQTLSQKVQETIADYTKRLAIGLHCLGMMNIQFVIKDEKVYVIEVNPRASRTVPFLSKVTNIPMAQVATKLILGQSLSELGYQNGLYPESTRVHIKAPVFSFTKLAKVDSLLGPEMKSTGEVMGSDATLEKALYKAFEASYLHLPTFGNVVFTIADDAKEEALNLARRFQNIGYGILATEGTAAFFASHGLQAQPVGKIGDDDKDIPSFVRKGRIQAIINTVGTKRTADEDGEQIRRSAIEHGVPLFTALDTANAMLKVLESRSFVTEAI.

A carboxyphosphate synthetic domain region spans residues 1–401; that stretch reads MPKRTDIQKI…SLLKACRSLE (401 aa). 12 residues coordinate ATP: Arg-129, Arg-169, Gly-175, Gly-176, Arg-208, Ile-210, Glu-215, Gly-241, Ile-242, His-243, Gln-284, and Glu-298. Residues 133-327 form the ATP-grasp 1 domain; that stretch reads KQLMEELEQP…IAKLAAKIAV (195 aa). Gln-284, Glu-298, and Asn-300 together coordinate Mg(2+). Residues Gln-284, Glu-298, and Asn-300 each contribute to the Mn(2+) site. The tract at residues 402–546 is oligomerization domain; the sequence is IGVHHNEIPE…YSTYGWENES (145 aa). The carbamoyl phosphate synthetic domain stretch occupies residues 547–929; that stretch reads IRSDKESVLV…ALYKAFEASY (383 aa). The ATP-grasp 2 domain occupies 671–861; the sequence is EQALKELDIP…MAQVATKLIL (191 aa). Positions 707, 746, 748, 752, 777, 778, 779, 780, 820, and 832 each coordinate ATP. Mg(2+) is bound by residues Gln-820, Glu-832, and Asn-834. The Mn(2+) site is built by Gln-820, Glu-832, and Asn-834. One can recognise an MGS-like domain in the interval 930-1058; it reads LHLPTFGNVV…ESRSFVTEAI (129 aa). The segment at 930–1058 is allosteric domain; sequence LHLPTFGNVV…ESRSFVTEAI (129 aa).

Belongs to the CarB family. As to quaternary structure, composed of two chains; the small (or glutamine) chain promotes the hydrolysis of glutamine to ammonia, which is used by the large (or ammonia) chain to synthesize carbamoyl phosphate. Tetramer of heterodimers (alpha,beta)4. Requires Mg(2+) as cofactor. Mn(2+) is required as a cofactor.

The catalysed reaction is hydrogencarbonate + L-glutamine + 2 ATP + H2O = carbamoyl phosphate + L-glutamate + 2 ADP + phosphate + 2 H(+). It carries out the reaction hydrogencarbonate + NH4(+) + 2 ATP = carbamoyl phosphate + 2 ADP + phosphate + 2 H(+). It participates in amino-acid biosynthesis; L-arginine biosynthesis; carbamoyl phosphate from bicarbonate: step 1/1. It functions in the pathway pyrimidine metabolism; UMP biosynthesis via de novo pathway; (S)-dihydroorotate from bicarbonate: step 1/3. Functionally, large subunit of the glutamine-dependent carbamoyl phosphate synthetase (CPSase). CPSase catalyzes the formation of carbamoyl phosphate from the ammonia moiety of glutamine, carbonate, and phosphate donated by ATP, constituting the first step of 2 biosynthetic pathways, one leading to arginine and/or urea and the other to pyrimidine nucleotides. The large subunit (synthetase) binds the substrates ammonia (free or transferred from glutamine from the small subunit), hydrogencarbonate and ATP and carries out an ATP-coupled ligase reaction, activating hydrogencarbonate by forming carboxy phosphate which reacts with ammonia to form carbamoyl phosphate. The polypeptide is Carbamoyl phosphate synthase large chain (Streptococcus pneumoniae (strain 70585)).